Reading from the N-terminus, the 250-residue chain is Probable transcriptional regulatory protein RC1_1808 (250 aa).

Residues 1–21 form a disordered region; sequence MAGHSQFKNIMHRKGAQDAKR.

It belongs to the TACO1 family.

The protein localises to the cytoplasm. In Rhodospirillum centenum (strain ATCC 51521 / SW), this protein is Probable transcriptional regulatory protein RC1_1808.